A 129-amino-acid polypeptide reads, in one-letter code: MPKTVITPPGTGTPIAPFSPGTLADGIVYVSGTLAFDKDNNVAFPGDAEAQTRQVLETIKSVIETAGGTMEDVVMNHIFLTDWVHYAPMNKVYAEYFPGDKPARYCIQCGLVKPGFVVEIASVAHIGKP.

Belongs to the RutC family.

It catalyses the reaction (Z)-3-aminoacrylate + H2O + H(+) = 3-oxopropanoate + NH4(+). In terms of biological role, involved in pyrimidine catabolism. Catalyzes the deamination of 3-aminoacrylate to malonic semialdehyde, a reaction that can also occur spontaneously. RutC may facilitate the reaction and modulate the metabolic fitness, rather than catalyzing essential functions. In Caulobacter segnis (strain ATCC 21756 / DSM 7131 / JCM 7823 / NBRC 15250 / LMG 17158 / TK0059) (Mycoplana segnis), this protein is 3-aminoacrylate deaminase RutC.